The chain runs to 191 residues: Orotate phosphoribosyltransferase (191 aa).

Glu116 to Ser124 contacts 5-phospho-alpha-D-ribose 1-diphosphate. Orotate-binding residues include Thr120 and Arg148.

It belongs to the purine/pyrimidine phosphoribosyltransferase family. PyrE subfamily. As to quaternary structure, homodimer. It depends on Mg(2+) as a cofactor.

It catalyses the reaction orotidine 5'-phosphate + diphosphate = orotate + 5-phospho-alpha-D-ribose 1-diphosphate. The protein operates within pyrimidine metabolism; UMP biosynthesis via de novo pathway; UMP from orotate: step 1/2. In terms of biological role, catalyzes the transfer of a ribosyl phosphate group from 5-phosphoribose 1-diphosphate to orotate, leading to the formation of orotidine monophosphate (OMP). The protein is Orotate phosphoribosyltransferase of Carboxydothermus hydrogenoformans (strain ATCC BAA-161 / DSM 6008 / Z-2901).